We begin with the raw amino-acid sequence, 351 residues long: Minor outer capsid protein P9 (351 aa).

2 disordered regions span residues 245–281 and 288–307; these read GGVP…DQPE and KKVD…GNVS. The span at 288 to 297 shows a compositional bias: basic and acidic residues; that stretch reads KKVDASKDAP.

Belongs to the phytoreovirus minor outer capsid protein P9 family.

It localises to the virion. It is found in the host cytoplasm. Its function is as follows. Minor outer capsid protein. The chain is Minor outer capsid protein P9 from Rice dwarf virus (RDV).